The following is a 491-amino-acid chain: Probable cytosol aminopeptidase (491 aa).

K264 and D269 together coordinate Mn(2+). The active site involves K276. Mn(2+) is bound by residues D287, D346, and E348. Residue R350 is part of the active site.

This sequence belongs to the peptidase M17 family. Mn(2+) serves as cofactor.

The protein resides in the cytoplasm. The catalysed reaction is Release of an N-terminal amino acid, Xaa-|-Yaa-, in which Xaa is preferably Leu, but may be other amino acids including Pro although not Arg or Lys, and Yaa may be Pro. Amino acid amides and methyl esters are also readily hydrolyzed, but rates on arylamides are exceedingly low.. It catalyses the reaction Release of an N-terminal amino acid, preferentially leucine, but not glutamic or aspartic acids.. Presumably involved in the processing and regular turnover of intracellular proteins. Catalyzes the removal of unsubstituted N-terminal amino acids from various peptides. In Xylella fastidiosa (strain 9a5c), this protein is Probable cytosol aminopeptidase.